The chain runs to 163 residues: Mediator of RNA polymerase II transcription subunit 10 (163 aa).

Residues Ala-57 to Pro-79 are disordered. Residues Tyr-63–Gly-72 show a composition bias toward polar residues.

Belongs to the Mediator complex subunit 10 family. Component of the Mediator complex.

It localises to the nucleus. In terms of biological role, component of the Mediator complex, a coactivator involved in the regulated transcription of nearly all RNA polymerase II-dependent genes. Mediator functions as a bridge to convey information from gene-specific regulatory proteins to the basal RNA polymerase II transcription machinery. Mediator is recruited to promoters by direct interactions with regulatory proteins and serves as a scaffold for the assembly of a functional preinitiation complex with RNA polymerase II and the general transcription factors. This Coccidioides immitis (strain RS) (Valley fever fungus) protein is Mediator of RNA polymerase II transcription subunit 10 (NUT2).